The following is a 968-amino-acid chain: Insulin receptor substrate 1 (968 aa).

One can recognise a PH domain in the interval 8–109 (GMALSGYLKK…WLDKLLVLQR (102 aa)). Residues 122 to 236 (YDHVWQVVIQ…SAMSAKTESN (115 aa)) form the IRS-type PTB domain. Residues 248–269 (DLSHEPMRKRSSSANEASKPIN) are disordered. 2 positions are modified to phosphoserine: Ser-286 and Ser-287. Polar residues predominate over residues 304–329 (RNGTLSESSNQTYFGSNHGLRSNTIS). The segment at 304 to 370 (RNGTLSESSN…VDESDDNGSF (67 aa)) is disordered. Phosphoserine is present on Ser-342. Phosphotyrosine; by INSR is present on Tyr-411. A YXXM motif 1 motif is present at residues 411–414 (YIPM). The tract at residues 528-555 (TANRSQSSITKEGTSYGSSANRQKKSTS) is disordered. Residues 529 to 555 (ANRSQSSITKEGTSYGSSANRQKKSTS) are compositionally biased toward polar residues. Residue Ser-555 is modified to Phosphoserine. Residues 641-644 (YLEM) carry the YXXM motif 2 motif. Over residues 697-711 (EKWREQPSRSEEKKS) the composition is skewed to basic and acidic residues. Residues 697–739 (EKWREQPSRSEEKKSNSPLNDNTFSSKPTNVESTSKSHDVHSA) form a disordered region. Over residues 712 to 730 (NSPLNDNTFSSKPTNVEST) the composition is skewed to polar residues. Position 911 is a phosphotyrosine; by INSR (Tyr-911). The segment at 922 to 968 (QNPAKYLKRGSRESPPVSACPEDGNTYAKIDFDQSDSSSSSSNIFNT) is disordered. Ser-932 and Ser-935 each carry phosphoserine. Tyr-948 is subject to Phosphotyrosine; by INSR. The segment covering 956 to 968 (SDSSSSSSNIFNT) has biased composition (low complexity).

In terms of assembly, bindings to phosphatidylinositol 3-kinase and SHP2.

In terms of biological role, activates phosphatidylinositol 3-kinase when bound to the regulatory p85 subunit. May mediate the control of various cellular processes by insulin-like peptides. When phosphorylated by the insulin receptor binds specifically to various cellular proteins containing SH2 domains. Involved in control of cell proliferation, cell size, and body and organ growth throughout development. Also has a role in a signaling pathway controlling the physiological response required to endure periods of low nutrient conditions. Insulin/insulin-like growth factor (IGF) signaling pathway has a role in regulating aging and is necessary in the ovary for vitellogenic maturation. This chain is Insulin receptor substrate 1 (chico), found in Drosophila melanogaster (Fruit fly).